Here is a 101-residue protein sequence, read N- to C-terminus: NAD(P)H-quinone oxidoreductase subunit 4L, chloroplastic (101 aa).

Helical transmembrane passes span 2–22 (ILEH…YGLI), 32–52 (MCLE…SDFF), and 61–81 (IFSI…PAIL).

It belongs to the complex I subunit 4L family. NDH is composed of at least 16 different subunits, 5 of which are encoded in the nucleus.

It localises to the plastid. It is found in the chloroplast thylakoid membrane. The catalysed reaction is a plastoquinone + NADH + (n+1) H(+)(in) = a plastoquinol + NAD(+) + n H(+)(out). It catalyses the reaction a plastoquinone + NADPH + (n+1) H(+)(in) = a plastoquinol + NADP(+) + n H(+)(out). Its function is as follows. NDH shuttles electrons from NAD(P)H:plastoquinone, via FMN and iron-sulfur (Fe-S) centers, to quinones in the photosynthetic chain and possibly in a chloroplast respiratory chain. The immediate electron acceptor for the enzyme in this species is believed to be plastoquinone. Couples the redox reaction to proton translocation, and thus conserves the redox energy in a proton gradient. The sequence is that of NAD(P)H-quinone oxidoreductase subunit 4L, chloroplastic from Platanus occidentalis (Sycamore).